A 296-amino-acid chain; its full sequence is L-ornithine N(alpha)-acyltransferase (296 aa).

This sequence belongs to the acetyltransferase family. OlsB subfamily.

It catalyses the reaction a (3R)-hydroxyacyl-[ACP] + L-ornithine = a lyso-ornithine lipid + holo-[ACP] + H(+). Its pathway is lipid metabolism. Functionally, catalyzes the first step in the biosynthesis of ornithine lipids, which are phosphorus-free membrane lipids. Catalyzes the 3-hydroxyacyl-acyl carrier protein-dependent acylation of ornithine to form lyso-ornithine lipid (LOL). This chain is L-ornithine N(alpha)-acyltransferase, found in Rhizobium meliloti (strain 1021) (Ensifer meliloti).